We begin with the raw amino-acid sequence, 604 residues long: Glutamine--fructose-6-phosphate aminotransferase [isomerizing] (604 aa).

Cys2 serves as the catalytic Nucleophile; for GATase activity. One can recognise a Glutamine amidotransferase type-2 domain in the interval 2-218 (CGIVGVVGNR…DKELVILTKD (217 aa)). 2 SIS domains span residues 284-423 (IVKT…ANGK) and 456-594 (VEKL…VDKP). Lys599 serves as the catalytic For Fru-6P isomerization activity.

In terms of assembly, homodimer.

It localises to the cytoplasm. It carries out the reaction D-fructose 6-phosphate + L-glutamine = D-glucosamine 6-phosphate + L-glutamate. In terms of biological role, catalyzes the first step in hexosamine metabolism, converting fructose-6P into glucosamine-6P using glutamine as a nitrogen source. This Streptococcus pyogenes serotype M6 (strain ATCC BAA-946 / MGAS10394) protein is Glutamine--fructose-6-phosphate aminotransferase [isomerizing].